Reading from the N-terminus, the 227-residue chain is Germin-like protein subfamily 1 member 3 (227 aa).

The signal sequence occupies residues 1-24; it reads MKYPFQCFLAKIILLALASSFVSC. Cys-34 and Cys-50 are disulfide-bonded. The Cupin type-1 domain occupies 64-212; that stretch reads SGLNIPGNTN…AFALDINIVR (149 aa). His-109, His-111, and Glu-116 together coordinate Mn(2+). A glycan (N-linked (GlcNAc...) asparagine) is linked at Asn-136. A Mn(2+)-binding site is contributed by His-160.

Belongs to the germin family. In terms of assembly, oligomer (believed to be a pentamer but probably hexamer).

The protein resides in the secreted. It is found in the extracellular space. It localises to the apoplast. Its function is as follows. May play a role in plant defense. Probably has no oxalate oxidase activity even if the active site is conserved. The polypeptide is Germin-like protein subfamily 1 member 3 (Arabidopsis thaliana (Mouse-ear cress)).